Reading from the N-terminus, the 350-residue chain is MNDTFLKACRRENTPYTPVWLMRQAGRYMAEYMEIRNKYSFLEMCKTPELAVEVTLQPVRKLGVDAAILFADILLPLEGMGIGFRFARDEGPVIENPVRTIVDVKKVRVITPEEDVPYVLEAIKILRRELAGKVPLIGFSGAPFTLASYIIEGGGSKNYIQCKRLMWEAPEAWHELLGKIAESTVRYLKAQIAAGAQAVQVFDSWVGTLSPEDYEKYVLPHSKYVFDNLKETGVPVIHFANNAGSMLELVAAAGGDVIGLDWRVSLDRAWQTVGFDRGVQGNLDPVALFAPKEVIRQKVKEILIKAGKRPGHIFNLGHGIHKETPVENAQYLVEVVHELSSLSYEQLLEA.

Substrate is bound by residues 23-27 (RQAGR), D72, Y149, S204, and H318.

Belongs to the uroporphyrinogen decarboxylase family. Homodimer.

Its subcellular location is the cytoplasm. The enzyme catalyses uroporphyrinogen III + 4 H(+) = coproporphyrinogen III + 4 CO2. It participates in porphyrin-containing compound metabolism; protoporphyrin-IX biosynthesis; coproporphyrinogen-III from 5-aminolevulinate: step 4/4. Catalyzes the decarboxylation of four acetate groups of uroporphyrinogen-III to yield coproporphyrinogen-III. This chain is Uroporphyrinogen decarboxylase, found in Carboxydothermus hydrogenoformans (strain ATCC BAA-161 / DSM 6008 / Z-2901).